We begin with the raw amino-acid sequence, 393 residues long: DNA polymerase processivity factor (393 aa).

3 disordered regions span residues 25–50 (EMERGSRDHHRDHRDHREHRETREPP), 311–339 (ESRFERMGKQDDGKGDRSHKNDDGSALAS), and 355–393 (KNGTAGSSLFNEKEDSESDDSMHFDYSSNPNPKRQRCVV). Residues 31–41 (RDHHRDHRDHR) are compositionally biased toward basic residues. Basic and acidic residues predominate over residues 311-333 (ESRFERMGKQDDGKGDRSHKNDD).

It belongs to the herpesviridae polymerase accessory protein family.

Accessory subunit of the DNA polymerase that acts to increase the processivity of polymerization. The polypeptide is DNA polymerase processivity factor (U27) (Human herpesvirus 6A (strain Uganda-1102) (HHV-6 variant A)).